Consider the following 599-residue polypeptide: Aspartate--tRNA ligase (599 aa).

Residue Glu-180 participates in L-aspartate binding. An aspartate region spans residues Gln-204 to Lys-207. Arg-226 is a binding site for L-aspartate. ATP is bound by residues Arg-226–Glu-228 and Gln-235. An L-aspartate-binding site is contributed by His-454. Glu-488 contacts ATP. Arg-495 provides a ligand contact to L-aspartate. Position 540–543 (Gly-540–Arg-543) interacts with ATP.

Belongs to the class-II aminoacyl-tRNA synthetase family. Type 1 subfamily. As to quaternary structure, homodimer.

It is found in the cytoplasm. The catalysed reaction is tRNA(Asp) + L-aspartate + ATP = L-aspartyl-tRNA(Asp) + AMP + diphosphate. In terms of biological role, catalyzes the attachment of L-aspartate to tRNA(Asp) in a two-step reaction: L-aspartate is first activated by ATP to form Asp-AMP and then transferred to the acceptor end of tRNA(Asp). The protein is Aspartate--tRNA ligase of Clostridium botulinum (strain Alaska E43 / Type E3).